The following is a 306-amino-acid chain: Pantothenate kinase (306 aa).

91–98 (GSVAVGKS) contacts ATP.

It belongs to the prokaryotic pantothenate kinase family.

Its subcellular location is the cytoplasm. The enzyme catalyses (R)-pantothenate + ATP = (R)-4'-phosphopantothenate + ADP + H(+). It participates in cofactor biosynthesis; coenzyme A biosynthesis; CoA from (R)-pantothenate: step 1/5. This Streptococcus suis (strain 98HAH33) protein is Pantothenate kinase.